We begin with the raw amino-acid sequence, 352 residues long: Protein RecA (352 aa).

74 to 81 (GPESSGKT) contributes to the ATP binding site.

Belongs to the RecA family.

It localises to the cytoplasm. Can catalyze the hydrolysis of ATP in the presence of single-stranded DNA, the ATP-dependent uptake of single-stranded DNA by duplex DNA, and the ATP-dependent hybridization of homologous single-stranded DNAs. It interacts with LexA causing its activation and leading to its autocatalytic cleavage. The polypeptide is Protein RecA (Ralstonia nicotianae (strain ATCC BAA-1114 / GMI1000) (Ralstonia solanacearum)).